Here is a 430-residue protein sequence, read N- to C-terminus: Proteasome-activating nucleotidase (430 aa).

A coiled-coil region spans residues 9 to 89 (TELKKEKKAF…LRRELDRMRV (81 aa)). Residues 214–219 (GTGKTL) and H353 each bind ATP. A docks into pockets in the proteasome alpha-ring to cause gate opening region spans residues 428 to 430 (LYR).

Belongs to the AAA ATPase family. In terms of assembly, homohexamer. The hexameric complex has a two-ring architecture resembling a top hat that caps the 20S proteasome core at one or both ends. Alone, can form a complex composed of two stacked hexameric rings in vitro. Upon ATP-binding, the C-terminus of PAN interacts with the alpha-rings of the proteasome core by binding to the intersubunit pockets.

Its subcellular location is the cytoplasm. ATPase activity is inhibited by EDTA, N-ethylmaleimide (NEM) and p-chloromercuriphenyl-sulfonic acid (PCMS) in vitro. Functionally, ATPase which is responsible for recognizing, binding, unfolding and translocation of substrate proteins into the archaeal 20S proteasome core particle. Is essential for opening the gate of the 20S proteasome via an interaction with its C-terminus, thereby allowing substrate entry and access to the site of proteolysis. Thus, the C-termini of the proteasomal ATPase function like a 'key in a lock' to induce gate opening and therefore regulate proteolysis. Unfolding activity requires energy from ATP hydrolysis, whereas ATP binding alone promotes ATPase-20S proteasome association which triggers gate opening, and supports translocation of unfolded substrates. In addition to ATP, is able to cleave other nucleotide triphosphates such as CTP, GTP and UTP, but hydrolysis of these other nucleotides is less effective in promoting proteolysis than ATP. Moreover, PAN by itself can function as a chaperone in vitro. The chain is Proteasome-activating nucleotidase from Methanocaldococcus jannaschii (strain ATCC 43067 / DSM 2661 / JAL-1 / JCM 10045 / NBRC 100440) (Methanococcus jannaschii).